Here is a 225-residue protein sequence, read N- to C-terminus: MHIHDWPTHERPREKLLARGATALSDAELLAIFVGSGLRGQDAVQTARDLLHRHGPLRLLLDRPAKTLARLPGLGPASACKLAAAMELAQRHLMSALERGEALSDPPSVGRYFSQRLRARAYEVFAALFLDNRHRAIAFEELFTGTIDGADIHPREVVRRALLHNAAAVIVGHNHPSGNPEPSEADRAVTKRLLDSLELVDIRLLDHFVIGDGRPVSFAERGWLE.

One can recognise an MPN domain in the interval 102 to 224 (ALSDPPSVGR…PVSFAERGWL (123 aa)). Zn(2+) is bound by residues His-173, His-175, and Asp-186. The JAMM motif signature appears at 173–186 (HNHPSGNPEPSEAD).

It belongs to the UPF0758 family.

The sequence is that of UPF0758 protein XCV4028 from Xanthomonas euvesicatoria pv. vesicatoria (strain 85-10) (Xanthomonas campestris pv. vesicatoria).